Reading from the N-terminus, the 289-residue chain is MWFQLKIEHCPNDKIEEITEELEEYGALSITLTDKNDNPVLEPEPGTTPLWPEVIIHALFAQAEEAQYVREQLVAKRPSLHCSLELLADKNWERAWMDDFRPQRFGNRLWVCPTWLPPPEPDAVNLMLDPGLAFGTGTHATTSLCLTWLEQADLKNKSIIDYGCGSGILSLAAIKLGAKHVYAVDIDNQALQATQSNAHANHITESQLSISTPEALQNPVHLIIANILLAPLISLKERFHQLLPSGAHLVTSGILEEQAPLLIDAYDSAFTHIATEYCEGWSLLVFTSK.

Thr142, Gly163, Asp185, and Asn226 together coordinate S-adenosyl-L-methionine.

The protein belongs to the methyltransferase superfamily. PrmA family.

Its subcellular location is the cytoplasm. The catalysed reaction is L-lysyl-[protein] + 3 S-adenosyl-L-methionine = N(6),N(6),N(6)-trimethyl-L-lysyl-[protein] + 3 S-adenosyl-L-homocysteine + 3 H(+). In terms of biological role, methylates ribosomal protein L11. The chain is Ribosomal protein L11 methyltransferase from Legionella pneumophila (strain Paris).